A 141-amino-acid polypeptide reads, in one-letter code: Nucleoside diphosphate kinase (141 aa).

Lys11, Phe59, Arg87, Thr93, Arg104, and Asn114 together coordinate ATP. The active-site Pros-phosphohistidine intermediate is His117.

This sequence belongs to the NDK family. Homotetramer. The cofactor is Mg(2+).

The protein resides in the cytoplasm. It catalyses the reaction a 2'-deoxyribonucleoside 5'-diphosphate + ATP = a 2'-deoxyribonucleoside 5'-triphosphate + ADP. The catalysed reaction is a ribonucleoside 5'-diphosphate + ATP = a ribonucleoside 5'-triphosphate + ADP. Major role in the synthesis of nucleoside triphosphates other than ATP. The ATP gamma phosphate is transferred to the NDP beta phosphate via a ping-pong mechanism, using a phosphorylated active-site intermediate. This chain is Nucleoside diphosphate kinase, found in Proteus mirabilis (strain HI4320).